A 147-amino-acid chain; its full sequence is Molybdopterin synthase catalytic subunit 1 (147 aa).

Substrate contacts are provided by residues Asn43–Arg45, His109–Arg110, Lys125, and Lys132–Glu134.

Belongs to the MoaE family. Heterotetramer of 2 MoaD subunits and 2 MoaE subunits. Also stable as homodimer. The enzyme changes between these two forms during catalysis.

The catalysed reaction is 2 [molybdopterin-synthase sulfur-carrier protein]-C-terminal-Gly-aminoethanethioate + cyclic pyranopterin phosphate + H2O = molybdopterin + 2 [molybdopterin-synthase sulfur-carrier protein]-C-terminal Gly-Gly + 2 H(+). Its pathway is cofactor biosynthesis; molybdopterin biosynthesis. Its function is as follows. Converts molybdopterin precursor Z into molybdopterin. This requires the incorporation of two sulfur atoms into precursor Z to generate a dithiolene group. The sulfur is provided by MoaD. The protein is Molybdopterin synthase catalytic subunit 1 (moaE1) of Mycobacterium tuberculosis (strain ATCC 25618 / H37Rv).